A 303-amino-acid chain; its full sequence is NAD(+)--arginine ADP-ribosyltransferase Lart1 (303 aa).

The protein localises to the secreted. The enzyme catalyses L-arginyl-[protein] + NAD(+) = N(omega)-(ADP-D-ribosyl)-L-arginyl-[protein] + nicotinamide + H(+). ADP-ribosyltransferase that targets a specific class of NAD(+)-dependent glutamate dehydrogenase (GDH) enzymes found in fungi and protists, including many natural hosts of Legionella. Acts by targeting a conserved arginine residue in the NAD(+)-binding pocket of GDH, thereby blocking oxidative deamination of glutamate. Lart1 may target amoeba GDH to prevent a conserved stress response. In vitro, acts on Glud2 from the amoeba Dictyostelium discoideum (DdGluD2) and yeast Gdh2p but does not act on human or Legionella GDH homologs. This Legionella pneumophila subsp. pneumophila (strain Philadelphia 1 / ATCC 33152 / DSM 7513) protein is NAD(+)--arginine ADP-ribosyltransferase Lart1.